The chain runs to 178 residues: MKSELTVPLARLVPWQTPAQCEPPEALLPWLLEADSMTRRLRRHNRHFSVQLFGNRSVALDADEQQLVVAEQPMGLCREVILHGDHGPAVLGWTLFAEAALQESGLRELGEQPLGERIFGDEPARRDHLQLACFEIASNPWCPAGTVWGRRSRLFLGQWPLLVHELFLPSLSCNKELE.

Substrate-binding residues include M37, R78, L114, and E165.

This sequence belongs to the UbiC family.

It localises to the cytoplasm. The enzyme catalyses chorismate = 4-hydroxybenzoate + pyruvate. It participates in cofactor biosynthesis; ubiquinone biosynthesis. Removes the pyruvyl group from chorismate, with concomitant aromatization of the ring, to provide 4-hydroxybenzoate (4HB) for the ubiquinone pathway. The polypeptide is Probable chorismate pyruvate-lyase (Aeromonas hydrophila subsp. hydrophila (strain ATCC 7966 / DSM 30187 / BCRC 13018 / CCUG 14551 / JCM 1027 / KCTC 2358 / NCIMB 9240 / NCTC 8049)).